A 647-amino-acid polypeptide reads, in one-letter code: Cartilage acidic protein 1 (647 aa).

The first 30 residues, 1–30 (MMLPADFFVPVSKMMLLALLLSIIICCGGA), serve as a signal peptide directing secretion. An FG-GAP 1; atypical repeat occupies 48-90 (DYDSNPTQLNYGVAITDVDNDGDFEVVVAGYNGPNLVLKYIKE). The stretch at 107 to 149 (YALRDRQGNAIGVAACDIDGDGREEIYFLNTNNAFSGIATYSD) is one FG-GAP 2; atypical repeat. One copy of the FG-GAP 3; atypical repeat lies at 285–335 (TGVDDVYQHGRGVALADFNRDGKVDIVYGNWNGPHRLFLQMNTNGKVRFRD). The FG-GAP 4; atypical repeat unit spans residues 397–439 (GDASEPDGRGTGGAVTDFDGDGMLDLILSHGESMAQPLSVFKG). The 47-residue stretch at 561–607 (DTDECIQFPFVCPREKPVCINTYGGYKCRPNRRCSRGFEPNEDGTAC) folds into the EGF-like domain. Cystine bridges form between Cys565-Cys579, Cys572-Cys588, and Cys594-Cys607.

Its subcellular location is the secreted. It is found in the extracellular space. It localises to the extracellular matrix. The chain is Cartilage acidic protein 1 (crtac1) from Xenopus tropicalis (Western clawed frog).